Reading from the N-terminus, the 655-residue chain is Alpha-L-iduronidase (655 aa).

The first 25 residues, 1–25, serve as a signal peptide directing secretion; the sequence is MRPPGPRAPGLALLAALLAAPRALA. 3 residues coordinate alpha-D-mannopyranose: P53, L55, and H57. H90 is an alpha-L-iduronate binding site. N109 carries an N-linked (GlcNAc...) asparagine glycan. Alpha-L-iduronate is bound by residues N180 and E181. Residue E181 is the Proton donor of the active site. N-linked (GlcNAc...) asparagine glycans are attached at residues N189 and N242. K263, E298, and G304 together coordinate alpha-L-iduronate. E298 functions as the Nucleophile in the catalytic mechanism. Residue W305 participates in alpha-D-mannopyranose binding. N335 carries N-linked (GlcNAc...) asparagine glycosylation. Alpha-L-iduronate contacts are provided by D348 and R362. 2 N-linked (GlcNAc...) asparagine glycosylation sites follow: N371 and N414. C540 and C576 are joined by a disulfide.

The protein belongs to the glycosyl hydrolase 39 family. In terms of assembly, monomer. Post-translationally, a smaller 63 kDa protein probably arises from IDUA protein by proteolytic cleavage. N-glycosylation contributes to substrate binding and is required for full enzymatic activity. In terms of tissue distribution, detected in testis (at protein level). Expressed ubiquitously.

The protein resides in the lysosome. The enzyme catalyses Hydrolysis of unsulfated alpha-L-iduronosidic linkages in dermatan sulfate.. The sequence is that of Alpha-L-iduronidase (IDUA) from Canis lupus familiaris (Dog).